A 696-amino-acid chain; its full sequence is Ribonucleoside-diphosphate reductase subunit beta (696 aa).

Fe cation-binding residues include Asp-97, Glu-127, and His-130. Tyr-134 is a catalytic residue. 2 residues coordinate Fe cation: Glu-194 and Glu-228. Residues 377 to 507 enclose the DOD-type homing endonuclease domain; sequence DGTIDSKRNG…FVQALCALGG (131 aa). Fe cation is bound at residue His-577.

The protein belongs to the ribonucleoside diphosphate reductase small chain family. In terms of assembly, tetramer of two alpha and two beta subunits. Requires Fe cation as cofactor. In terms of processing, this protein undergoes a protein self splicing that involves a post-translational excision of the intervening region (intein) followed by peptide ligation.

The catalysed reaction is a 2'-deoxyribonucleoside 5'-diphosphate + [thioredoxin]-disulfide + H2O = a ribonucleoside 5'-diphosphate + [thioredoxin]-dithiol. Functionally, provides the precursors necessary for DNA synthesis. Catalyzes the biosynthesis of deoxyribonucleotides from the corresponding ribonucleotides. This chain is Ribonucleoside-diphosphate reductase subunit beta (nrdB), found in Aquifex aeolicus (strain VF5).